Reading from the N-terminus, the 285-residue chain is Ribosomal RNA small subunit methyltransferase A (285 aa).

The S-adenosyl-L-methionine site is built by asparagine 11, leucine 13, glycine 37, glutamate 57, aspartate 85, and asparagine 105.

The protein belongs to the class I-like SAM-binding methyltransferase superfamily. rRNA adenine N(6)-methyltransferase family. RsmA subfamily.

The protein localises to the cytoplasm. It carries out the reaction adenosine(1518)/adenosine(1519) in 16S rRNA + 4 S-adenosyl-L-methionine = N(6)-dimethyladenosine(1518)/N(6)-dimethyladenosine(1519) in 16S rRNA + 4 S-adenosyl-L-homocysteine + 4 H(+). Specifically dimethylates two adjacent adenosines (A1518 and A1519) in the loop of a conserved hairpin near the 3'-end of 16S rRNA in the 30S particle. May play a critical role in biogenesis of 30S subunits. The sequence is that of Ribosomal RNA small subunit methyltransferase A from Campylobacter curvus (strain 525.92).